A 316-amino-acid polypeptide reads, in one-letter code: Ribosomal protein L11 methyltransferase (316 aa).

Residues Thr157, Gly178, Asp200, and Asn243 each coordinate S-adenosyl-L-methionine.

The protein belongs to the methyltransferase superfamily. PrmA family.

It is found in the cytoplasm. The catalysed reaction is L-lysyl-[protein] + 3 S-adenosyl-L-methionine = N(6),N(6),N(6)-trimethyl-L-lysyl-[protein] + 3 S-adenosyl-L-homocysteine + 3 H(+). Methylates ribosomal protein L11. The sequence is that of Ribosomal protein L11 methyltransferase from Streptococcus pneumoniae (strain ATCC 700669 / Spain 23F-1).